The sequence spans 113 residues: Guanylate cyclase activator 2B (113 aa).

An N-terminal signal peptide occupies residues methionine 1 to serine 27. The propeptide occupies valine 28 to alanine 97. Disulfide bonds link cysteine 68–cysteine 81, cysteine 101–cysteine 109, and cysteine 104–cysteine 112.

The protein belongs to the guanylin family.

It localises to the secreted. In terms of biological role, endogenous activator of intestinal guanylate cyclase. It stimulates this enzyme through the same receptor binding region as the heat-stable enterotoxins. May be a potent physiological regulator of intestinal fluid and electrolyte transport. May be an autocrine/paracrine regulator of intestinal salt and water transport. The chain is Guanylate cyclase activator 2B (GUCA2B) from Sus scrofa (Pig).